A 563-amino-acid polypeptide reads, in one-letter code: Eukaryotic translation initiation factor 3 subunit D-1 (563 aa).

Residues V98–S167 are disordered. Residues K100–N121 are compositionally biased toward basic residues. T128 is subject to Phosphothreonine. The segment at E291–P305 is RNA gate.

It belongs to the eIF-3 subunit D family. As to quaternary structure, component of the eukaryotic translation initiation factor 3 (eIF-3) complex. The eIF-3 complex interacts with pix.

It localises to the cytoplasm. Functionally, mRNA cap-binding component of the eukaryotic translation initiation factor 3 (eIF-3) complex, which is involved in protein synthesis of a specialized repertoire of mRNAs and, together with other initiation factors, stimulates binding of mRNA and methionyl-tRNAi to the 40S ribosome. The eIF-3 complex specifically targets and initiates translation of a subset of mRNAs involved in cell proliferation. In the eIF-3 complex, eif3d specifically recognizes and binds the 7-methylguanosine cap of a subset of mRNAs. This Drosophila mojavensis (Fruit fly) protein is Eukaryotic translation initiation factor 3 subunit D-1.